The following is a 1050-amino-acid chain: Valine--tRNA ligase (1050 aa).

Residues 37–57 are compositionally biased toward basic and acidic residues; sequence EKKAAASDKPVKEAKAKKEQT. The tract at residues 37 to 72 is disordered; that stretch reads EKKAAASDKPVKEAKAKKEQTVEAAEPVDQTPTGQR. Positions 127-137 match the 'HIGH' region motif; sequence PNVTGNLHVGH. Positions 642-646 match the 'KMSKS' region motif; the sequence is KMSKS. Lys-645 lines the ATP pocket.

This sequence belongs to the class-I aminoacyl-tRNA synthetase family.

It carries out the reaction tRNA(Val) + L-valine + ATP = L-valyl-tRNA(Val) + AMP + diphosphate. This is Valine--tRNA ligase from Caenorhabditis elegans.